Here is a 218-residue protein sequence, read N- to C-terminus: LHFPL tetraspan subfamily member 3 protein (218 aa).

4 consecutive transmembrane segments (helical) span residues 22-42 (IGVL…VCFI), 96-116 (FFIG…GLFF), 126-146 (ICAW…MIFP), and 177-197 (ILAI…FVLG).

Belongs to the LHFP family.

It is found in the membrane. This Xenopus laevis (African clawed frog) protein is LHFPL tetraspan subfamily member 3 protein.